Here is a 197-residue protein sequence, read N- to C-terminus: Imidazoleglycerol-phosphate dehydratase (197 aa).

The protein belongs to the imidazoleglycerol-phosphate dehydratase family.

It is found in the cytoplasm. The enzyme catalyses D-erythro-1-(imidazol-4-yl)glycerol 3-phosphate = 3-(imidazol-4-yl)-2-oxopropyl phosphate + H2O. Its pathway is amino-acid biosynthesis; L-histidine biosynthesis; L-histidine from 5-phospho-alpha-D-ribose 1-diphosphate: step 6/9. This is Imidazoleglycerol-phosphate dehydratase from Syntrophobacter fumaroxidans (strain DSM 10017 / MPOB).